The following is a 227-amino-acid chain: uncharacterized protein (227 aa).

Residues methionine 1–alanine 25 form the signal peptide.

This sequence to R.conorii RC1281.

This is an uncharacterized protein from Rickettsia conorii (strain ATCC VR-613 / Malish 7).